The chain runs to 134 residues: UPF0102 protein Dshi_2830 (134 aa).

This sequence belongs to the UPF0102 family.

In Dinoroseobacter shibae (strain DSM 16493 / NCIMB 14021 / DFL 12), this protein is UPF0102 protein Dshi_2830.